We begin with the raw amino-acid sequence, 249 residues long: MADRYSFSLTTFSPSGKLVQIEYALNAVNQGVTALGIKATNGIVLATEKKSSSPLADPSSLSKISLITPNIGMVYSGMGPDYRVLVDRARKVSHTGYKRIYNEYPPTRILVQDVARVMQEATQSGGVRPYGVSLLIAGWDEGGPMLYQVDPSGSYFPWKATAIGKNATTAKTFLEKRYTEGLELEDAVHIALLTLKETIEGEMNGDTIEIGIVGPPADHLLGVEGVEGAKGPRFRKLSPQEIEDYLTNL.

It belongs to the peptidase T1A family. As to quaternary structure, the 26S proteasome consists of a 20S proteasome core and two 19S regulatory subunits. The 20S proteasome core is composed of 28 subunits that are arranged in four stacked rings, resulting in a barrel-shaped structure. The two end rings are each formed by seven alpha subunits, and the two central rings are each formed by seven beta subunits. The catalytic chamber with the active sites is on the inside of the barrel.

It is found in the cytoplasm. Its subcellular location is the nucleus. Its function is as follows. The proteasome is a multicatalytic proteinase complex which is characterized by its ability to cleave peptides with Arg, Phe, Tyr, Leu, and Glu adjacent to the leaving group at neutral or slightly basic pH. The proteasome has an ATP-dependent proteolytic activity. This chain is Probable proteasome subunit alpha type-2 (pca-2), found in Neurospora crassa (strain ATCC 24698 / 74-OR23-1A / CBS 708.71 / DSM 1257 / FGSC 987).